A 236-amino-acid polypeptide reads, in one-letter code: Peptidase E (236 aa).

Catalysis depends on charge relay system residues S122, D137, and H159.

It belongs to the peptidase S51 family.

The protein resides in the cytoplasm. The enzyme catalyses Dipeptidase E catalyzes the hydrolysis of dipeptides Asp-|-Xaa. It does not act on peptides with N-terminal Glu, Asn or Gln, nor does it cleave isoaspartyl peptides.. In terms of biological role, hydrolyzes dipeptides containing N-terminal aspartate residues. May play a role in allowing the cell to use peptide aspartate to spare carbon otherwise required for the synthesis of the aspartate family of amino acids. This is Peptidase E from Shewanella sp. (strain MR-4).